Reading from the N-terminus, the 299-residue chain is Taste receptor type 2 member 4 (299 aa).

Residues 1-9 lie on the Extracellular side of the membrane; that stretch reads MLRLFYFSA. The helical transmembrane segment at 10 to 30 threads the bilayer; the sequence is IIASVILNFVGIIMNLFITVV. Over 31–46 the chain is Cytoplasmic; it reads NCKTWVKSHRISSSDR. A helical membrane pass occupies residues 47-67; sequence ILFSLGITRFLMLGLFLVNTI. Over 68–81 the chain is Extracellular; the sequence is YFVSSNXERSVYLS. The helical transmembrane segment at 82 to 102 threads the bilayer; it reads AFFVLCFMFLDSSSLWFVTLL. Residues 103 to 131 lie on the Cytoplasmic side of the membrane; sequence NILYCVKITNFQHSVFLLLKRNISPKIPR. Residues 132–152 form a helical membrane-spanning segment; the sequence is LLLACVLISAFTTCLYITLSQ. The Extracellular segment spans residues 153-172; it reads ASPFPELVTTRNNTSFNINE. N164 and N165 each carry an N-linked (GlcNAc...) asparagine glycan. The chain crosses the membrane as a helical span at residues 173–193; the sequence is GILSLVVSLVLSSSLQFIINV. Topologically, residues 194-230 are cytoplasmic; it reads TSASLLIHSLRRHIQKMQKNATGFWNPQTEAHVGAMK. A helical membrane pass occupies residues 231 to 251; sequence LMVYFLILYIPYSVATLVQYL. Residues 252–262 are Extracellular-facing; that stretch reads PFYAGMDMGTK. The chain crosses the membrane as a helical span at residues 263–283; that stretch reads SICLIFATLYSPGHSVLIIIT. Residues 284–299 lie on the Cytoplasmic side of the membrane; sequence HPKLKTTAKKILCFKK.

Belongs to the G-protein coupled receptor T2R family.

It localises to the membrane. The protein localises to the cell projection. The protein resides in the cilium membrane. Functionally, gustducin-coupled receptor implicated in the perception of bitter compounds in the oral cavity and the gastrointestinal tract. Signals through PLCB2 and the calcium-regulated cation channel TRPM5. In airway epithelial cells, binding of denatonium increases the intracellular calcium ion concentration and stimulates ciliary beat frequency. The chain is Taste receptor type 2 member 4 (TAS2R4) from Pan troglodytes (Chimpanzee).